A 292-amino-acid polypeptide reads, in one-letter code: Elongation factor Ts (292 aa).

Positions 79 to 82 (TDFV) are involved in Mg(2+) ion dislocation from EF-Tu.

This sequence belongs to the EF-Ts family.

The protein localises to the cytoplasm. Its function is as follows. Associates with the EF-Tu.GDP complex and induces the exchange of GDP to GTP. It remains bound to the aminoacyl-tRNA.EF-Tu.GTP complex up to the GTP hydrolysis stage on the ribosome. The protein is Elongation factor Ts of Staphylococcus epidermidis (strain ATCC 12228 / FDA PCI 1200).